The sequence spans 157 residues: Tuberoinfundibular peptide of 39 residues (157 aa).

An N-terminal signal peptide occupies residues 1–25 (MALSLPPRPALLFLVLMSVTLMASA). A propeptide spanning residues 26-116 (FPQPQLRPLQ…DWPSRVGHQQ (91 aa)) is cleaved from the precursor.

It belongs to the parathyroid hormone family.

It localises to the secreted. Functionally, plays a role as a potent and selective agonist of pth2r resulting in adenyl cyclase activation and intracellular calcium level elevation. The chain is Tuberoinfundibular peptide of 39 residues from Danio rerio (Zebrafish).